The following is a 353-amino-acid chain: Photosystem II D2 protein (353 aa).

Threonine 2 bears the N-acetylthreonine mark. Threonine 2 carries the post-translational modification Phosphothreonine. Residues 41-61 (CAYFALGGWFTGTTFVTSWYT) traverse the membrane as a helical segment. Residue histidine 118 coordinates chlorophyll a. A helical transmembrane segment spans residues 125 to 141 (GFMLRQFELARSVQLRP). Positions 130 and 143 each coordinate pheophytin a. Residues 153-166 (VFVSVFLIYPLGQS) traverse the membrane as a helical segment. Histidine 198 contributes to the chlorophyll a binding site. The chain crosses the membrane as a helical span at residues 208–228 (AALLCAIHGATVENTLFEDGD). The a plastoquinone site is built by histidine 215 and phenylalanine 262. Histidine 215 contributes to the Fe cation binding site. Histidine 269 serves as a coordination point for Fe cation. Residues 279-295 (GLWMSAIGVVGLALNLR) form a helical membrane-spanning segment.

Belongs to the reaction center PufL/M/PsbA/D family. PSII is composed of 1 copy each of membrane proteins PsbA, PsbB, PsbC, PsbD, PsbE, PsbF, PsbH, PsbI, PsbJ, PsbK, PsbL, PsbM, PsbT, PsbX, PsbY, PsbZ, Psb30/Ycf12, at least 3 peripheral proteins of the oxygen-evolving complex and a large number of cofactors. It forms dimeric complexes. The cofactor is The D1/D2 heterodimer binds P680, chlorophylls that are the primary electron donor of PSII, and subsequent electron acceptors. It shares a non-heme iron and each subunit binds pheophytin, quinone, additional chlorophylls, carotenoids and lipids. There is also a Cl(-1) ion associated with D1 and D2, which is required for oxygen evolution. The PSII complex binds additional chlorophylls, carotenoids and specific lipids..

The protein localises to the plastid. The protein resides in the chloroplast thylakoid membrane. The catalysed reaction is 2 a plastoquinone + 4 hnu + 2 H2O = 2 a plastoquinol + O2. In terms of biological role, photosystem II (PSII) is a light-driven water:plastoquinone oxidoreductase that uses light energy to abstract electrons from H(2)O, generating O(2) and a proton gradient subsequently used for ATP formation. It consists of a core antenna complex that captures photons, and an electron transfer chain that converts photonic excitation into a charge separation. The D1/D2 (PsbA/PsbD) reaction center heterodimer binds P680, the primary electron donor of PSII as well as several subsequent electron acceptors. D2 is needed for assembly of a stable PSII complex. The protein is Photosystem II D2 protein of Cryptomeria japonica (Japanese cedar).